The following is a 626-amino-acid chain: Chaperone protein HtpG (626 aa).

An a; substrate-binding region spans residues M1–R341. The b stretch occupies residues E342–K552. The segment at D490–N509 is disordered. Positions K498–N509 are enriched in basic and acidic residues. The segment at V553 to K626 is c.

This sequence belongs to the heat shock protein 90 family. As to quaternary structure, homodimer.

The protein localises to the cytoplasm. Functionally, molecular chaperone. Has ATPase activity. The sequence is that of Chaperone protein HtpG from Clostridium botulinum (strain Loch Maree / Type A3).